A 338-amino-acid chain; its full sequence is Holliday junction branch migration complex subunit RuvB (338 aa).

A large ATPase domain (RuvB-L) region spans residues 1 to 181 (MEERILTQNF…FGVINRLDYY (181 aa)). Residues Leu20, Arg21, Gly62, Lys65, Thr66, Thr67, 128–130 (EDF), Arg171, Tyr181, and Arg218 each bind ATP. Thr66 contacts Mg(2+). The interval 182 to 252 (SVEELKEIIK…TANIALNMLG (71 aa)) is small ATPAse domain (RuvB-S). The tract at residues 255–338 (EMGLEEIDRK…YVEQRRIEDV (84 aa)) is head domain (RuvB-H). Residues Arg310 and Arg315 each coordinate DNA.

The protein belongs to the RuvB family. As to quaternary structure, homohexamer. Forms an RuvA(8)-RuvB(12)-Holliday junction (HJ) complex. HJ DNA is sandwiched between 2 RuvA tetramers; dsDNA enters through RuvA and exits via RuvB. An RuvB hexamer assembles on each DNA strand where it exits the tetramer. Each RuvB hexamer is contacted by two RuvA subunits (via domain III) on 2 adjacent RuvB subunits; this complex drives branch migration. In the full resolvosome a probable DNA-RuvA(4)-RuvB(12)-RuvC(2) complex forms which resolves the HJ.

Its subcellular location is the cytoplasm. The enzyme catalyses ATP + H2O = ADP + phosphate + H(+). In terms of biological role, the RuvA-RuvB-RuvC complex processes Holliday junction (HJ) DNA during genetic recombination and DNA repair, while the RuvA-RuvB complex plays an important role in the rescue of blocked DNA replication forks via replication fork reversal (RFR). RuvA specifically binds to HJ cruciform DNA, conferring on it an open structure. The RuvB hexamer acts as an ATP-dependent pump, pulling dsDNA into and through the RuvAB complex. RuvB forms 2 homohexamers on either side of HJ DNA bound by 1 or 2 RuvA tetramers; 4 subunits per hexamer contact DNA at a time. Coordinated motions by a converter formed by DNA-disengaged RuvB subunits stimulates ATP hydrolysis and nucleotide exchange. Immobilization of the converter enables RuvB to convert the ATP-contained energy into a lever motion, pulling 2 nucleotides of DNA out of the RuvA tetramer per ATP hydrolyzed, thus driving DNA branch migration. The RuvB motors rotate together with the DNA substrate, which together with the progressing nucleotide cycle form the mechanistic basis for DNA recombination by continuous HJ branch migration. Branch migration allows RuvC to scan DNA until it finds its consensus sequence, where it cleaves and resolves cruciform DNA. The sequence is that of Holliday junction branch migration complex subunit RuvB from Caldanaerobacter subterraneus subsp. tengcongensis (strain DSM 15242 / JCM 11007 / NBRC 100824 / MB4) (Thermoanaerobacter tengcongensis).